A 415-amino-acid chain; its full sequence is 3-isopropylmalate dehydratase large subunit (415 aa).

3 residues coordinate [4Fe-4S] cluster: C297, C355, and C358.

The protein belongs to the aconitase/IPM isomerase family. LeuC type 2 subfamily. Heterodimer of LeuC and LeuD. The cofactor is [4Fe-4S] cluster.

The enzyme catalyses (2R,3S)-3-isopropylmalate = (2S)-2-isopropylmalate. Its pathway is amino-acid biosynthesis; L-leucine biosynthesis; L-leucine from 3-methyl-2-oxobutanoate: step 2/4. Catalyzes the isomerization between 2-isopropylmalate and 3-isopropylmalate, via the formation of 2-isopropylmaleate. This Metallosphaera sedula (strain ATCC 51363 / DSM 5348 / JCM 9185 / NBRC 15509 / TH2) protein is 3-isopropylmalate dehydratase large subunit.